The primary structure comprises 303 residues: 5-dehydro-4-deoxyglucarate dehydratase (303 aa).

The protein belongs to the DapA family.

The enzyme catalyses 5-dehydro-4-deoxy-D-glucarate + H(+) = 2,5-dioxopentanoate + CO2 + H2O. It participates in carbohydrate acid metabolism; D-glucarate degradation; 2,5-dioxopentanoate from D-glucarate: step 2/2. The protein is 5-dehydro-4-deoxyglucarate dehydratase of Pseudomonas putida (Arthrobacter siderocapsulatus).